The following is a 380-amino-acid chain: Queuine tRNA-ribosyltransferase (380 aa).

The Proton acceptor role is filled by Asp-96. Substrate is bound by residues 96 to 100, Asp-150, Gln-193, and Gly-220; that span reads DSGGF. The interval 251 to 257 is RNA binding; sequence GVGAPDS. The active-site Nucleophile is the Asp-270. The segment at 275 to 279 is RNA binding; important for wobble base 34 recognition; it reads TRIAR. Cys-308, Cys-310, Cys-313, and His-339 together coordinate Zn(2+).

Belongs to the queuine tRNA-ribosyltransferase family. As to quaternary structure, homodimer. Within each dimer, one monomer is responsible for RNA recognition and catalysis, while the other monomer binds to the replacement base PreQ1. Zn(2+) is required as a cofactor.

It catalyses the reaction 7-aminomethyl-7-carbaguanine + guanosine(34) in tRNA = 7-aminomethyl-7-carbaguanosine(34) in tRNA + guanine. The protein operates within tRNA modification; tRNA-queuosine biosynthesis. Functionally, catalyzes the base-exchange of a guanine (G) residue with the queuine precursor 7-aminomethyl-7-deazaguanine (PreQ1) at position 34 (anticodon wobble position) in tRNAs with GU(N) anticodons (tRNA-Asp, -Asn, -His and -Tyr). Catalysis occurs through a double-displacement mechanism. The nucleophile active site attacks the C1' of nucleotide 34 to detach the guanine base from the RNA, forming a covalent enzyme-RNA intermediate. The proton acceptor active site deprotonates the incoming PreQ1, allowing a nucleophilic attack on the C1' of the ribose to form the product. After dissociation, two additional enzymatic reactions on the tRNA convert PreQ1 to queuine (Q), resulting in the hypermodified nucleoside queuosine (7-(((4,5-cis-dihydroxy-2-cyclopenten-1-yl)amino)methyl)-7-deazaguanosine). The sequence is that of Queuine tRNA-ribosyltransferase from Streptococcus pyogenes serotype M1.